Reading from the N-terminus, the 217-residue chain is Probable GTP-binding protein EngB (217 aa).

One can recognise an EngB-type G domain in the interval 37–214 (SGLEVAFAGR…RAAMARLIGD (178 aa)). GTP contacts are provided by residues 45-52 (GRSNVGKS), 72-76 (GRTQE), 92-95 (DMPG), 159-162 (TKAD), and 193-195 (TSS). Mg(2+) is bound by residues serine 52 and threonine 74.

Belongs to the TRAFAC class TrmE-Era-EngA-EngB-Septin-like GTPase superfamily. EngB GTPase family. Requires Mg(2+) as cofactor.

Its function is as follows. Necessary for normal cell division and for the maintenance of normal septation. The polypeptide is Probable GTP-binding protein EngB (Nitrobacter winogradskyi (strain ATCC 25391 / DSM 10237 / CIP 104748 / NCIMB 11846 / Nb-255)).